A 92-amino-acid chain; its full sequence is Precursor of elicitor peptide 1 (92 aa).

A propeptide spanning residues 1–69 is cleaved from the precursor; it reads MEKSDRRSEE…EKEEVVVTSR (69 aa). Positions 35–92 are disordered; it reads HQDSPTTSSPGTSKQPKEEKEDVTMEKEEVVVTSRATKVKAKQRGKEKVSSGRPGQHN. The segment covering 37-48 has biased composition (polar residues); sequence DSPTTSSPGTSK. Over residues 49–64 the composition is skewed to basic and acidic residues; the sequence is QPKEEKEDVTMEKEEV.

This sequence belongs to the brassicaceae elicitor peptide family. As to quaternary structure, interacts with its receptor PEPR1.

Its function is as follows. Elicitor of plant defense. Induces the production of plant defensin (PDF1.2) and of H(2)O(2). Promotes resistance to the root fungal pathogen P.irregulare. Triggers the expression of several PROSCOOP genes (e.g. PROSCOOP2, PROSCOOP7, PROSCOOP8, PROSCOOP12 and PROSCOOP13). The protein is Precursor of elicitor peptide 1 of Arabidopsis thaliana (Mouse-ear cress).